The sequence spans 151 residues: Putative phosphatidylglycerol/phosphatidylinositol transfer protein 3 (151 aa).

The first 26 residues, 1 to 26 (MKYSQNQIVYVIFFFIILIVVKPIES), serve as a signal peptide directing secretion.

This sequence belongs to the NPC2 family. As to quaternary structure, monomer.

Catalyzes the intermembrane transfer of phosphatidylglycerol and phosphatidylinositol. This Dictyostelium discoideum (Social amoeba) protein is Putative phosphatidylglycerol/phosphatidylinositol transfer protein 3.